Consider the following 449-residue polypeptide: MPRKHFGTDGIRGQANSVITPELAMKVAQATGVLFQRGEHRHRAVIGKDTRLSSYMIEYAMVAGFASVGVDALLLGPMPTPAVAMLTHSMRADVGVMISASHNSYEDNGIKLFGPDGFKLSDEVETKIETMLDAGFALKLSKPADLGRAMRVEGDRARYIEFAKRTLTRSLSLEGLRIVVDCANGAAYKVAPEALWELGAEVISIGVEPDGFNINRGVGSTSPQALVKKVREMRADIGIALDGDADRVLIVDETGKIVDGDQLMAVIAASWKEDGRLSRPGIVATVMSNLGLERYLESIGLTLARTAVGDRYVLEHMRSEGYNLGGEQSGHIILSDFCTTGDGLVAALQLLAVVKRLEKPVSQVCRRFEPSPQVLRSVRVAAGKPLEDASVARAIDLARKRLAASGRLVIRASGTEPVIRVMGEGDDLDLVESIVNELCDIVASSARAA.

Catalysis depends on Ser101, which acts as the Phosphoserine intermediate. Mg(2+)-binding residues include Ser101, Asp242, Asp244, and Asp246. Ser101 carries the phosphoserine modification.

It belongs to the phosphohexose mutase family. Requires Mg(2+) as cofactor. Post-translationally, activated by phosphorylation.

The enzyme catalyses alpha-D-glucosamine 1-phosphate = D-glucosamine 6-phosphate. Its function is as follows. Catalyzes the conversion of glucosamine-6-phosphate to glucosamine-1-phosphate. This is Phosphoglucosamine mutase from Methylocella silvestris (strain DSM 15510 / CIP 108128 / LMG 27833 / NCIMB 13906 / BL2).